A 218-amino-acid polypeptide reads, in one-letter code: Large ribosomal subunit protein bL25 (218 aa).

The segment at Ser187–Lys218 is disordered. Low complexity predominate over residues Glu202 to Lys218.

This sequence belongs to the bacterial ribosomal protein bL25 family. CTC subfamily. Part of the 50S ribosomal subunit; part of the 5S rRNA/L5/L18/L25 subcomplex. Contacts the 5S rRNA. Binds to the 5S rRNA independently of L5 and L18.

In terms of biological role, this is one of the proteins that binds to the 5S RNA in the ribosome where it forms part of the central protuberance. In Anaplasma marginale (strain Florida), this protein is Large ribosomal subunit protein bL25.